The chain runs to 241 residues: Small ribosomal subunit protein uS5 (241 aa).

The segment at 1 to 53 (MSDNEKETQVAEETQNTQAAAESNNEDRKSRRGQRGEGRRGERRNRREESHEN) is disordered. The span at 11–22 (AEETQNTQAAAE) shows a compositional bias: low complexity. The span at 25 to 53 (NEDRKSRRGQRGEGRRGERRNRREESHEN) shows a compositional bias: basic and acidic residues. Positions 55-118 (MLDRVVTINR…LDAKKHMFTV (64 aa)) constitute an S5 DRBM domain.

This sequence belongs to the universal ribosomal protein uS5 family. As to quaternary structure, part of the 30S ribosomal subunit. Contacts proteins S4 and S8.

In terms of biological role, with S4 and S12 plays an important role in translational accuracy. Functionally, located at the back of the 30S subunit body where it stabilizes the conformation of the head with respect to the body. This chain is Small ribosomal subunit protein uS5, found in Bifidobacterium adolescentis (strain ATCC 15703 / DSM 20083 / NCTC 11814 / E194a).